A 246-amino-acid polypeptide reads, in one-letter code: Serine protease 1 (246 aa).

A signal peptide spans 1-15; it reads MKTFIFLALLGATVA. Residues 16 to 23 constitute a propeptide, activation peptide; sequence FPIDDDDK. A Peptidase S1 domain is found at 24–244; it reads IVGGYTCSRN…YVSWIQQTIA (221 aa). Intrachain disulfides connect cysteine 30–cysteine 160, cysteine 48–cysteine 64, cysteine 132–cysteine 233, cysteine 139–cysteine 206, cysteine 171–cysteine 185, and cysteine 196–cysteine 220. The Charge relay system role is filled by histidine 63. Ca(2+) contacts are provided by glutamate 75, asparagine 77, valine 80, and glutamate 85. The active-site Charge relay system is aspartate 107. Serine 200 functions as the Charge relay system in the catalytic mechanism.

This sequence belongs to the peptidase S1 family. Interacts with SERPINA1. Ca(2+) serves as cofactor.

It localises to the secreted. Its subcellular location is the extracellular space. It carries out the reaction Preferential cleavage: Arg-|-Xaa, Lys-|-Xaa.. The chain is Serine protease 1 from Canis lupus familiaris (Dog).